The following is a 748-amino-acid chain: Tyrosine--tRNA ligase 2, cytoplasmic (748 aa).

The residue at position 1 (M1) is an N-acetylmethionine. The short motif at P441–Q449 is the 'HIGH' region element. The L-tyrosine site is built by Y564, Q568, D571, and Q586. The 'KMSKS' region motif lies at K623–S627. Position 626 (K626) interacts with ATP.

It belongs to the class-I aminoacyl-tRNA synthetase family.

Its subcellular location is the cytoplasm. It is found in the cytosol. It carries out the reaction tRNA(Tyr) + L-tyrosine + ATP = L-tyrosyl-tRNA(Tyr) + AMP + diphosphate + H(+). Catalyzes the attachment of tyrosine to tRNA(Tyr) in a two-step reaction: tyrosine is first activated by ATP to form Tyr-AMP and then transferred to the acceptor end of tRNA(Tyr). In Arabidopsis thaliana (Mouse-ear cress), this protein is Tyrosine--tRNA ligase 2, cytoplasmic.